Reading from the N-terminus, the 264-residue chain is DNA-directed RNA polymerase subunit Rpo3 (264 aa).

[3Fe-4S] cluster contacts are provided by cysteine 203, cysteine 206, and cysteine 209.

The protein belongs to the archaeal Rpo3/eukaryotic RPB3 RNA polymerase subunit family. Part of the RNA polymerase complex. Requires [3Fe-4S] cluster as cofactor.

It is found in the cytoplasm. The enzyme catalyses RNA(n) + a ribonucleoside 5'-triphosphate = RNA(n+1) + diphosphate. DNA-dependent RNA polymerase (RNAP) catalyzes the transcription of DNA into RNA using the four ribonucleoside triphosphates as substrates. This chain is DNA-directed RNA polymerase subunit Rpo3, found in Methanothermobacter thermautotrophicus (strain ATCC 29096 / DSM 1053 / JCM 10044 / NBRC 100330 / Delta H) (Methanobacterium thermoautotrophicum).